The primary structure comprises 219 residues: MOB kinase activator-like 1 (219 aa).

Zn(2+) is bound by residues Cys79, Cys84, His161, and His166.

The protein belongs to the MOB1/phocein family. In terms of assembly, interacts with and activates trc and wts. In terms of processing, phosphorylated by wts/mats kinase complex. Activated by phosphorylation by Hippo (Hpo) kinase which increases its affinity and its ability to activate Warts (Wts) kinase. Ubiquitously expressed at low levels in developing tissues (at protein level).

Its subcellular location is the cytoplasm. It localises to the cytoskeleton. The protein resides in the microtubule organizing center. It is found in the centrosome. The protein localises to the nucleus. Its subcellular location is the cytosol. It localises to the cell membrane. Its function is as follows. Coactivator of Warts (Wts) kinase in the Hippo/SWH (Sav/Wts/Hpo)signaling pathway, a signaling pathway that plays a pivotal role in organ size control and tumor suppression by restricting proliferation and promoting apoptosis. The core of this pathway is composed of a kinase cascade wherein Hippo (Hpo), in complex with its regulatory protein Salvador (Sav), phosphorylates and activates Warts (Wts) in complex with its regulatory protein Mats, which in turn phosphorylates and inactivates the Yorkie (Yki)oncoprotein. The Hippo/SWH signaling pathway inhibits the activity of the transcriptional complex formed by Scalloped (sd) and Yki and the target genes of this pathway include cyclin-E (cycE), diap1 and bantam. Mats is essential for early development and is required for proper chromosomal segregation in developing embryos. The chain is MOB kinase activator-like 1 from Drosophila melanogaster (Fruit fly).